The following is a 296-amino-acid chain: Probable deoxyuridine 5'-triphosphate nucleotidohydrolase (296 aa).

Residues 66–102 are a coiled coil; sequence EIDKNIVKNLEDKVNCLEQDVQYLKNELKKKDADWQQ.

This sequence belongs to the dUTPase family.

The catalysed reaction is dUTP + H2O = dUMP + diphosphate + H(+). Its pathway is pyrimidine metabolism; dUMP biosynthesis; dUMP from dCTP (dUTP route): step 2/2. Its function is as follows. This enzyme is involved in nucleotide metabolism: it produces dUMP, the immediate precursor of thymidine nucleotides and it decreases the intracellular concentration of dUTP so that uracil cannot be incorporated into DNA. The sequence is that of Probable deoxyuridine 5'-triphosphate nucleotidohydrolase from Acheta domesticus (House cricket).